Consider the following 267-residue polypeptide: Small ribosomal subunit protein uS2 (267 aa).

Positions 226–267 (AAAPNSASVREEEFSAESADEGKGRRAPAKKGEKKADAPAAE) are disordered. Residues 245–267 (DEGKGRRAPAKKGEKKADAPAAE) are compositionally biased toward basic and acidic residues.

Belongs to the universal ribosomal protein uS2 family.

The chain is Small ribosomal subunit protein uS2 from Xanthomonas oryzae pv. oryzae (strain MAFF 311018).